The following is a 420-amino-acid chain: MSLLNTPLHELDPDVAAAVDAELNRQQSTLEMIASENFAPVAVMEAQGSVLTNKYAEGYPGRRYYGGCEHVDVVEQIAIDRVKELFGAEHANVQPHSGAQANAAAMFALLKPGDTIMGLNLAHGGHLTHGMKINFSGKLYNVVAYHVDETTGQVDMAEVEKLAKESRPKLIVAGWSAYPRQLDFAAFRRIADEVGAYLMVDMAHFAGLVAAGLHPNPVPHAHVVTTTTHKTLGGPRGGVILSTAELAKKINSAVFPGQQGGPLEHVIAAKAVSFKVAASDDFKERQQRTLDGARILAERLVRDDVKAVGVDVLSGGTDVHLVLVDLRDSELDGQQAEDRLHEVGITVNRNAIPNDPRPPMVTSGLRIGTPALATRGFQAADFTEVADIIAEALKPSYDADALKARVTALADKHPLYPGLK.

(6S)-5,6,7,8-tetrahydrofolate is bound by residues leucine 121 and 125–127 (GHL). Lysine 230 carries the N6-(pyridoxal phosphate)lysine modification.

It belongs to the SHMT family. As to quaternary structure, homodimer. The cofactor is pyridoxal 5'-phosphate.

Its subcellular location is the cytoplasm. It catalyses the reaction (6R)-5,10-methylene-5,6,7,8-tetrahydrofolate + glycine + H2O = (6S)-5,6,7,8-tetrahydrofolate + L-serine. It participates in one-carbon metabolism; tetrahydrofolate interconversion. It functions in the pathway amino-acid biosynthesis; glycine biosynthesis; glycine from L-serine: step 1/1. Functionally, catalyzes the reversible interconversion of serine and glycine with tetrahydrofolate (THF) serving as the one-carbon carrier. This reaction serves as the major source of one-carbon groups required for the biosynthesis of purines, thymidylate, methionine, and other important biomolecules. Also exhibits THF-independent aldolase activity toward beta-hydroxyamino acids, producing glycine and aldehydes, via a retro-aldol mechanism. This chain is Serine hydroxymethyltransferase, found in Streptomyces avermitilis (strain ATCC 31267 / DSM 46492 / JCM 5070 / NBRC 14893 / NCIMB 12804 / NRRL 8165 / MA-4680).